The chain runs to 314 residues: Methionyl-tRNA formyltransferase (314 aa).

113 to 116 (SLLP) is a binding site for (6S)-5,6,7,8-tetrahydrofolate.

Belongs to the Fmt family.

The catalysed reaction is L-methionyl-tRNA(fMet) + (6R)-10-formyltetrahydrofolate = N-formyl-L-methionyl-tRNA(fMet) + (6S)-5,6,7,8-tetrahydrofolate + H(+). Attaches a formyl group to the free amino group of methionyl-tRNA(fMet). The formyl group appears to play a dual role in the initiator identity of N-formylmethionyl-tRNA by promoting its recognition by IF2 and preventing the misappropriation of this tRNA by the elongation apparatus. This Pseudomonas aeruginosa (strain ATCC 15692 / DSM 22644 / CIP 104116 / JCM 14847 / LMG 12228 / 1C / PRS 101 / PAO1) protein is Methionyl-tRNA formyltransferase.